Here is a 235-residue protein sequence, read N- to C-terminus: Purine nucleoside phosphorylase DeoD-type (235 aa).

An a purine D-ribonucleoside-binding site is contributed by His4. Residues Gly20, Arg24, Arg43, and Arg87–Thr90 each bind phosphate. Residues Glu162, Glu179–Glu181, and Ser203–Asp204 contribute to the a purine D-ribonucleoside site. Catalysis depends on Asp204, which acts as the Proton donor.

It belongs to the PNP/UDP phosphorylase family. Homohexamer; trimer of homodimers.

It catalyses the reaction a purine D-ribonucleoside + phosphate = a purine nucleobase + alpha-D-ribose 1-phosphate. It carries out the reaction a purine 2'-deoxy-D-ribonucleoside + phosphate = a purine nucleobase + 2-deoxy-alpha-D-ribose 1-phosphate. In terms of biological role, catalyzes the reversible phosphorolytic breakdown of the N-glycosidic bond in the beta-(deoxy)ribonucleoside molecules, with the formation of the corresponding free purine bases and pentose-1-phosphate. The protein is Purine nucleoside phosphorylase DeoD-type of Bacillus cereus (strain ZK / E33L).